The primary structure comprises 151 residues: Small ribosomal subunit protein uS15 (151 aa).

Residues 1–20 (MARLHSGKRGSSGSTRPLRT) are disordered.

Belongs to the universal ribosomal protein uS15 family. In terms of assembly, part of the 30S ribosomal subunit.

This is Small ribosomal subunit protein uS15 from Methanococcus maripaludis (strain C5 / ATCC BAA-1333).